The chain runs to 603 residues: Elongation factor 4 (603 aa).

Residues 6-188 (AHIRNFCIIA…SVVQNVPPPS (183 aa)) enclose the tr-type G domain. GTP-binding positions include 18-23 (DHGKST) and 135-138 (NKID).

Belongs to the TRAFAC class translation factor GTPase superfamily. Classic translation factor GTPase family. LepA subfamily.

The protein resides in the cell inner membrane. The catalysed reaction is GTP + H2O = GDP + phosphate + H(+). Functionally, required for accurate and efficient protein synthesis under certain stress conditions. May act as a fidelity factor of the translation reaction, by catalyzing a one-codon backward translocation of tRNAs on improperly translocated ribosomes. Back-translocation proceeds from a post-translocation (POST) complex to a pre-translocation (PRE) complex, thus giving elongation factor G a second chance to translocate the tRNAs correctly. Binds to ribosomes in a GTP-dependent manner. In Myxococcus xanthus (strain DK1622), this protein is Elongation factor 4.